Reading from the N-terminus, the 426-residue chain is Serine--tRNA ligase (426 aa).

230-232 (TSE) provides a ligand contact to L-serine. Position 261-263 (261-263 (RKE)) interacts with ATP. E284 serves as a coordination point for L-serine. Residue 348–351 (EISS) participates in ATP binding. S385 provides a ligand contact to L-serine.

The protein belongs to the class-II aminoacyl-tRNA synthetase family. Type-1 seryl-tRNA synthetase subfamily. Homodimer. The tRNA molecule binds across the dimer.

It localises to the cytoplasm. It catalyses the reaction tRNA(Ser) + L-serine + ATP = L-seryl-tRNA(Ser) + AMP + diphosphate + H(+). It carries out the reaction tRNA(Sec) + L-serine + ATP = L-seryl-tRNA(Sec) + AMP + diphosphate + H(+). Its pathway is aminoacyl-tRNA biosynthesis; selenocysteinyl-tRNA(Sec) biosynthesis; L-seryl-tRNA(Sec) from L-serine and tRNA(Sec): step 1/1. Functionally, catalyzes the attachment of serine to tRNA(Ser). Is also able to aminoacylate tRNA(Sec) with serine, to form the misacylated tRNA L-seryl-tRNA(Sec), which will be further converted into selenocysteinyl-tRNA(Sec). The chain is Serine--tRNA ligase from Wolbachia pipientis subsp. Culex pipiens (strain wPip).